Consider the following 96-residue polypeptide: Large ribosomal subunit protein eL14 (96 aa).

The protein belongs to the eukaryotic ribosomal protein eL14 family.

The sequence is that of Large ribosomal subunit protein eL14 from Desulfurococcus amylolyticus (strain DSM 18924 / JCM 16383 / VKM B-2413 / 1221n) (Desulfurococcus kamchatkensis).